Consider the following 163-residue polypeptide: ATP synthase subunit b (163 aa).

Residues 1–21 traverse the membrane as a helical segment; that stretch reads MISFNLTSIVNLVGFLAFMFL.

Belongs to the ATPase B chain family. F-type ATPases have 2 components, F(1) - the catalytic core - and F(0) - the membrane proton channel. F(1) has five subunits: alpha(3), beta(3), gamma(1), delta(1), epsilon(1). F(0) has three main subunits: a(1), b(2) and c(10-14). The alpha and beta chains form an alternating ring which encloses part of the gamma chain. F(1) is attached to F(0) by a central stalk formed by the gamma and epsilon chains, while a peripheral stalk is formed by the delta and b chains.

It localises to the cell inner membrane. Functionally, f(1)F(0) ATP synthase produces ATP from ADP in the presence of a proton or sodium gradient. F-type ATPases consist of two structural domains, F(1) containing the extramembraneous catalytic core and F(0) containing the membrane proton channel, linked together by a central stalk and a peripheral stalk. During catalysis, ATP synthesis in the catalytic domain of F(1) is coupled via a rotary mechanism of the central stalk subunits to proton translocation. Component of the F(0) channel, it forms part of the peripheral stalk, linking F(1) to F(0). This chain is ATP synthase subunit b, found in Petrotoga mobilis (strain DSM 10674 / SJ95).